Reading from the N-terminus, the 111-residue chain is MKKRLIGFLVLVPALIMSGITLIEANKKSPLEVIDNIRDEFGIFSVQIGQTDPAITIGMDQTKSEAKLREYLKDNLSREAKEKYKIYILKDDINKLEKEHREYLKANNPNK.

Residues 1–25 (MKKRLIGFLVLVPALIMSGITLIEA) form the signal peptide.

The sequence is that of SPbeta prophage-derived uncharacterized protein YolC (yolC) from Bacillus subtilis (strain 168).